The sequence spans 369 residues: 2-aminoethylphosphonate--pyruvate transaminase (369 aa).

Lysine 193 carries the N6-(pyridoxal phosphate)lysine modification.

It belongs to the class-V pyridoxal-phosphate-dependent aminotransferase family. PhnW subfamily. Homodimer. Pyridoxal 5'-phosphate is required as a cofactor.

It catalyses the reaction (2-aminoethyl)phosphonate + pyruvate = phosphonoacetaldehyde + L-alanine. Involved in phosphonate degradation. The sequence is that of 2-aminoethylphosphonate--pyruvate transaminase from Burkholderia thailandensis (strain ATCC 700388 / DSM 13276 / CCUG 48851 / CIP 106301 / E264).